The sequence spans 104 residues: Large ribosomal subunit protein uL24 (104 aa).

Belongs to the universal ribosomal protein uL24 family. Part of the 50S ribosomal subunit. A methylated and unmethylated form are thought to exist.

Functionally, one of two assembly initiator proteins, it binds directly to the 5'-end of the 23S rRNA, where it nucleates assembly of the 50S subunit. In terms of biological role, one of the proteins that surrounds the polypeptide exit tunnel on the outside of the subunit. This chain is Large ribosomal subunit protein uL24, found in Rhodopseudomonas palustris (strain ATCC BAA-98 / CGA009).